Reading from the N-terminus, the 166-residue chain is Putative transmembrane protein encoded by LINC00477 (166 aa).

Asparagine 7 is a glycosylation site (N-linked (GlcNAc...) asparagine). 3 helical membrane passes run 15-35 (VSSF…FFLC), 41-61 (MTGC…VLGP), and 63-83 (PMGM…RFLG). Residues 127 to 166 (LPVPHPPSPLSKCPQHPRPRRTKGPGLRKLWGPGPPFFPS) are disordered.

Its subcellular location is the membrane. The polypeptide is Putative transmembrane protein encoded by LINC00477 (LINC00477) (Homo sapiens (Human)).